Consider the following 305-residue polypeptide: RNA-binding protein with serine-rich domain 1 (305 aa).

Residues Met-1–Ser-10 are compositionally biased toward basic residues. Residues Met-1–Thr-161 form a necessary for interaction with SRP54, nuclear localization and exon-skipping region. The tract at residues Met-1 to Arg-170 is disordered. Positions Met-1 to Leu-220 are necessary for interaction with the cleaved p110 isoform of CDC2L1. Glycyl lysine isopeptide (Lys-Gly) (interchain with G-Cter in SUMO2) cross-links involve residues Lys-7 and Lys-15. Basic and acidic residues predominate over residues Asp-33 to Arg-59. Position 53 is a phosphoserine; by CK2 (Ser-53). Over residues Ala-68 to Pro-126 the composition is skewed to low complexity. Residues Ser-69–Ser-121 are necessary for interactions with UPF2 and UPF3B and UPF2-dependent NMD. 2 stretches are compositionally biased toward basic residues: residues Ser-127–Pro-143 and Arg-151–Arg-167. Ser-155 and Ser-157 each carry phosphoserine. Residues Pro-156–Trp-242 form a necessary for interaction with PNN and exon-skipping region. The interaction with SAP18 and ACIN1 stretch occupies residues Lys-159 to Arg-244. The residue at position 161 (Thr-161) is a Phosphothreonine. In terms of domain architecture, RRM spans Thr-161–Ala-240. An N6-acetyllysine modification is found at Lys-218. Residues Val-238–Arg-305 are necessary for interaction with TRA2B, nuclear localization and exon-skipping. The disordered stretch occupies residues Ala-240 to Arg-305. Positions Trp-242–Met-262 are enriched in pro residues. Basic residues predominate over residues Ser-266–Arg-298.

It belongs to the splicing factor SR family. In terms of assembly, found in mRNA splicing-dependent exon junction complexes (EJC). Found in a post-splicing complex with NXF1, RBM8A, UPF1, UPF2, UPF3A, UPF3B and RNPS1. Component of the heterotrimeric ASAP (apoptosis- and splicing-associated protein) and PSAP complexes consisting of RNPS1, SAP18 and either ACIN1 or PNN, respectively; the ASAP and PSAP complexes probably are formed mutually exclusive. Component of the active spliceosome. Associates with polysomes. Interacts with the cleaved p110 isoform of CDC2L1, CSNK2A1, PNN, SART3, SRP54, SRRM1 and TRA2B/SFRS10. Phosphorylated on one or more of the four Ser/Thr residues (Ser-43, Thr-49, Ser-52 or Ser-53). Ser-53 phosphorylation site is important for splicing and translation stimulation activity in vitro. In terms of tissue distribution, ubiquitous.

It localises to the nucleus. The protein localises to the nucleus speckle. Its subcellular location is the cytoplasm. In terms of biological role, part of pre- and post-splicing multiprotein mRNP complexes. Auxiliary component of the splicing-dependent multiprotein exon junction complex (EJC) deposited at splice junction on mRNAs. The EJC is a dynamic structure consisting of core proteins and several peripheral nuclear and cytoplasmic associated factors that join the complex only transiently either during EJC assembly or during subsequent mRNA metabolism. Component of the ASAP and PSAP complexes which bind RNA in a sequence-independent manner and are proposed to be recruited to the EJC prior to or during the splicing process and to regulate specific excision of introns in specific transcription subsets. The ASAP complex can inhibit RNA processing during in vitro splicing reactions. The ASAP complex promotes apoptosis and is disassembled after induction of apoptosis. Enhances the formation of the ATP-dependent A complex of the spliceosome. Involved in both constitutive splicing and, in association with SRP54 and TRA2B/SFRS10, in distinctive modulation of alternative splicing in a substrate-dependent manner. Involved in the splicing modulation of BCL2L1/Bcl-X (and probably other apoptotic genes); specifically inhibits formation of proapoptotic isoforms such as Bcl-X(S); the activity is different from the established EJC assembly and function. Participates in mRNA 3'-end cleavage. Involved in UPF2-dependent nonsense-mediated decay (NMD) of mRNAs containing premature stop codons. Also mediates increase of mRNA abundance and translational efficiency. Binds spliced mRNA 20-25 nt upstream of exon-exon junctions. This Homo sapiens (Human) protein is RNA-binding protein with serine-rich domain 1 (RNPS1).